Consider the following 319-residue polypeptide: 2,3,4,5-tetrahydropyridine-2,6-dicarboxylate N-succinyltransferase (319 aa).

Mg(2+) contacts are provided by Asp167 and Glu184. Glu200 (acyl-anhydride intermediate) is an active-site residue. Succinyl-CoA is bound by residues Arg202, Gly217, Ser220, Ala243, 258-259, and Lys278; that span reads EA.

The protein belongs to the type 2 tetrahydrodipicolinate N-succinyltransferase family. Homotrimer.

It is found in the cytoplasm. It carries out the reaction (S)-2,3,4,5-tetrahydrodipicolinate + succinyl-CoA + H2O = (S)-2-succinylamino-6-oxoheptanedioate + CoA. The protein operates within amino-acid biosynthesis; L-lysine biosynthesis via DAP pathway; LL-2,6-diaminopimelate from (S)-tetrahydrodipicolinate (succinylase route): step 1/3. Functionally, catalyzes the conversion of the cyclic tetrahydrodipicolinate (THDP) into the acyclic N-succinyl-L-2-amino-6-oxopimelate using succinyl-CoA. The chain is 2,3,4,5-tetrahydropyridine-2,6-dicarboxylate N-succinyltransferase from Salinispora tropica (strain ATCC BAA-916 / DSM 44818 / JCM 13857 / NBRC 105044 / CNB-440).